The following is a 690-amino-acid chain: Protein hook (690 aa).

One can recognise a Calponin-homology (CH) domain in the interval 6–122 (MEIYESLIRW…RLLQLILGCA (117 aa)). Coiled coils occupy residues 134-515 (QIME…HHAE) and 546-577 (ETTQ…QAAD).

This sequence belongs to the hook family. Homodimer. Interacts with microtubules via its N-terminus.

The protein resides in the cytoplasm. Its subcellular location is the cytoskeleton. It localises to the endosome. In terms of biological role, involved in endocytic trafficking. Probably acts as a cytoskeletal linker protein that tethers endosome vesicles to the cytoskeleton. The chain is Protein hook from Anopheles gambiae (African malaria mosquito).